The chain runs to 121 residues: Small ribosomal subunit protein uS13 (121 aa).

Positions 92 to 121 are disordered; it reads HKAGLPVRGQKTHSNARTRKGPRLTKIKKR. Residues 101–121 show a composition bias toward basic residues; that stretch reads QKTHSNARTRKGPRLTKIKKR.

It belongs to the universal ribosomal protein uS13 family. As to quaternary structure, part of the 30S ribosomal subunit. Forms a loose heterodimer with protein S19. Forms two bridges to the 50S subunit in the 70S ribosome.

Its function is as follows. Located at the top of the head of the 30S subunit, it contacts several helices of the 16S rRNA. In the 70S ribosome it contacts the 23S rRNA (bridge B1a) and protein L5 of the 50S subunit (bridge B1b), connecting the 2 subunits; these bridges are implicated in subunit movement. Contacts the tRNAs in the A and P-sites. In Petrotoga mobilis (strain DSM 10674 / SJ95), this protein is Small ribosomal subunit protein uS13.